A 182-amino-acid polypeptide reads, in one-letter code: ATP synthase subunit delta (182 aa).

This sequence belongs to the ATPase delta chain family. In terms of assembly, F-type ATPases have 2 components, F(1) - the catalytic core - and F(0) - the membrane proton channel. F(1) has five subunits: alpha(3), beta(3), gamma(1), delta(1), epsilon(1). CF(0) has four main subunits: a(1), b(1), b'(1) and c(10-14). The alpha and beta chains form an alternating ring which encloses part of the gamma chain. F(1) is attached to F(0) by a central stalk formed by the gamma and epsilon chains, while a peripheral stalk is formed by the delta, b and b' chains.

The protein localises to the cellular thylakoid membrane. Its function is as follows. F(1)F(0) ATP synthase produces ATP from ADP in the presence of a proton or sodium gradient. F-type ATPases consist of two structural domains, F(1) containing the extramembraneous catalytic core and F(0) containing the membrane proton channel, linked together by a central stalk and a peripheral stalk. During catalysis, ATP synthesis in the catalytic domain of F(1) is coupled via a rotary mechanism of the central stalk subunits to proton translocation. This protein is part of the stalk that links CF(0) to CF(1). It either transmits conformational changes from CF(0) to CF(1) or is implicated in proton conduction. The protein is ATP synthase subunit delta of Synechococcus sp. (strain CC9311).